The primary structure comprises 153 residues: 6,7-dimethyl-8-ribityllumazine synthase (153 aa).

5-amino-6-(D-ribitylamino)uracil-binding positions include phenylalanine 22, 56 to 58 (AFE), and 80 to 82 (TVI). Residue 85–86 (ST) participates in (2S)-2-hydroxy-3-oxobutyl phosphate binding. Catalysis depends on histidine 88, which acts as the Proton donor. Position 113 (phenylalanine 113) interacts with 5-amino-6-(D-ribitylamino)uracil. Arginine 127 lines the (2S)-2-hydroxy-3-oxobutyl phosphate pocket.

It belongs to the DMRL synthase family. Forms an icosahedral capsid composed of 60 subunits, arranged as a dodecamer of pentamers.

The catalysed reaction is (2S)-2-hydroxy-3-oxobutyl phosphate + 5-amino-6-(D-ribitylamino)uracil = 6,7-dimethyl-8-(1-D-ribityl)lumazine + phosphate + 2 H2O + H(+). Its pathway is cofactor biosynthesis; riboflavin biosynthesis; riboflavin from 2-hydroxy-3-oxobutyl phosphate and 5-amino-6-(D-ribitylamino)uracil: step 1/2. Its function is as follows. Catalyzes the formation of 6,7-dimethyl-8-ribityllumazine by condensation of 5-amino-6-(D-ribitylamino)uracil with 3,4-dihydroxy-2-butanone 4-phosphate. This is the penultimate step in the biosynthesis of riboflavin. The chain is 6,7-dimethyl-8-ribityllumazine synthase from Haemophilus ducreyi (strain 35000HP / ATCC 700724).